The sequence spans 523 residues: Translation initiation factor eIF2B subunit delta (523 aa).

Residues 1 to 154 (MAAVAVAVRE…EHTQADDPTL (154 aa)) are disordered. The residue at position 2 (Ala2) is an N-acetylalanine. Phosphoserine is present on Ser12. The span at 31-40 (MTQEEKLQLR) shows a compositional bias: basic and acidic residues. Over residues 41–51 (KEKKQQKKKRK) the composition is skewed to basic residues. At Thr85 the chain carries Phosphothreonine. The span at 95–120 (TKAELRAERRAKQEAERALKQARKGE) shows a compositional bias: basic and acidic residues. Position 129 is a phosphoserine (Ser129). The segment at 170-179 (RKDYGSKVSL) is may bind the chemical integrated stress response (ISR) inhibitor ISRIB.

This sequence belongs to the eIF-2B alpha/beta/delta subunits family. As to quaternary structure, component of the translation initiation factor 2B (eIF2B) complex which is a heterodecamer of two sets of five different subunits: alpha, beta, gamma, delta and epsilon. Subunits alpha, beta and delta comprise a regulatory subcomplex and subunits epsilon and gamma comprise a catalytic subcomplex. Within the complex, the hexameric regulatory complex resides at the center, with the two heterodimeric catalytic subcomplexes bound on opposite sides.

Its subcellular location is the cytoplasm. The protein localises to the cytosol. Activated by the chemical integrated stress response (ISR) inhibitor ISRIB which stimulates guanine nucleotide exchange factor activity for both phosphorylated and unphosphorylated eIF2. Its function is as follows. Acts as a component of the translation initiation factor 2B (eIF2B) complex, which catalyzes the exchange of GDP for GTP on eukaryotic initiation factor 2 (eIF2) gamma subunit. Its guanine nucleotide exchange factor activity is repressed when bound to eIF2 complex phosphorylated on the alpha subunit, thereby limiting the amount of methionyl-initiator methionine tRNA available to the ribosome and consequently global translation is repressed. The polypeptide is Translation initiation factor eIF2B subunit delta (EIF2B4) (Oryctolagus cuniculus (Rabbit)).